Here is a 373-residue protein sequence, read N- to C-terminus: Lipoyl amidotransferase LIPT1, mitochondrial (373 aa).

Residues 1–25 (MLIPFSMKNCFQLLCNCQVPAAGFK) constitute a mitochondrion transit peptide. The BPL/LPL catalytic domain maps to 57-243 (LEGKPILFFW…EYAAYHQIDN (187 aa)). Tyr107, Arg151, Lys161, and Thr179 together coordinate (R)-lipoyl-5'-AMP.

It belongs to the LplA family. In terms of tissue distribution, highly expressed in skeletal muscle and heart, moderately in kidney and pancreas, and detected at lower levels in liver, brain, placenta and lung.

The protein localises to the mitochondrion. It carries out the reaction N(6)-[(R)-lipoyl]-L-lysyl-[glycine-cleavage complex H protein] + L-lysyl-[lipoyl-carrier protein] = L-lysyl-[glycine-cleavage complex H protein] + N(6)-[(R)-lipoyl]-L-lysyl-[lipoyl-carrier protein]. The catalysed reaction is (R)-lipoyl-5'-AMP + L-lysyl-[lipoyl-carrier protein] = N(6)-[(R)-lipoyl]-L-lysyl-[lipoyl-carrier protein] + AMP + 2 H(+). The protein operates within protein modification; protein lipoylation via exogenous pathway; protein N(6)-(lipoyl)lysine from lipoate: step 2/2. Its function is as follows. Lipoyl amidotransferase that catalyzes the transfer of lipoyl moieties from lipoyl-protein H of the glycine cleavage system (lipoyl-GCSH) to E2 subunits of the pyruvate dehydrogenase complex (PDCE2). Unable to catalyze the transfer of octanoyl from octanoyl-GCSH to PDCE2. In vitro, it is also able to catalyze the transfer of the lipoyl group from lipoyl-AMP to the specific lysine residue of lipoyl domains of lipoate-dependent enzymes but this reaction may not be physiologically relevant. The sequence is that of Lipoyl amidotransferase LIPT1, mitochondrial from Homo sapiens (Human).